We begin with the raw amino-acid sequence, 113 residues long: Phosphoribosyl-ATP pyrophosphatase (113 aa).

Belongs to the PRA-PH family.

It is found in the cytoplasm. The catalysed reaction is 1-(5-phospho-beta-D-ribosyl)-ATP + H2O = 1-(5-phospho-beta-D-ribosyl)-5'-AMP + diphosphate + H(+). Its pathway is amino-acid biosynthesis; L-histidine biosynthesis; L-histidine from 5-phospho-alpha-D-ribose 1-diphosphate: step 2/9. The protein is Phosphoribosyl-ATP pyrophosphatase of Hydrogenovibrio crunogenus (strain DSM 25203 / XCL-2) (Thiomicrospira crunogena).